The primary structure comprises 489 residues: Rhamnulokinase (489 aa).

13 to 17 (ASSGR) is an ATP binding site. Cys68 and Cys222 are disulfide-bonded. Residues Gly83 and 236–238 (HDT) contribute to the substrate site. The active-site Proton acceptor is the Asp237. Thr259 contributes to the ATP binding site. Asn296 provides a ligand contact to substrate. An ATP-binding site is contributed by Gln304. An intrachain disulfide couples Cys353 to Cys370. ATP is bound at residue Gly402. A disulfide bridge links Cys413 with Cys417.

Belongs to the rhamnulokinase family. In terms of assembly, monomer. The cofactor is Mg(2+).

It catalyses the reaction L-rhamnulose + ATP = L-rhamnulose 1-phosphate + ADP + H(+). It functions in the pathway carbohydrate degradation; L-rhamnose degradation; glycerone phosphate from L-rhamnose: step 2/3. Functionally, involved in the catabolism of L-rhamnose (6-deoxy-L-mannose). Catalyzes the transfer of the gamma-phosphate group from ATP to the 1-hydroxyl group of L-rhamnulose to yield L-rhamnulose 1-phosphate. The protein is Rhamnulokinase of Escherichia coli O17:K52:H18 (strain UMN026 / ExPEC).